The following is a 459-amino-acid chain: Putrescine aminotransferase (459 aa).

Pyridoxal 5'-phosphate-binding positions include 150-151 (GT) and Gln274. N6-(pyridoxal phosphate)lysine is present on Lys300. Position 332 (Thr332) interacts with pyridoxal 5'-phosphate.

The protein belongs to the class-III pyridoxal-phosphate-dependent aminotransferase family. Putrescine aminotransferase subfamily. Requires pyridoxal 5'-phosphate as cofactor.

The enzyme catalyses an alkane-alpha,omega-diamine + 2-oxoglutarate = an omega-aminoaldehyde + L-glutamate. The catalysed reaction is putrescine + 2-oxoglutarate = 1-pyrroline + L-glutamate + H2O. It carries out the reaction cadaverine + 2-oxoglutarate = 5-aminopentanal + L-glutamate. It participates in amine and polyamine degradation; putrescine degradation; 4-aminobutanal from putrescine (transaminase route): step 1/1. In terms of biological role, catalyzes the aminotransferase reaction from putrescine to 2-oxoglutarate, leading to glutamate and 4-aminobutanal, which spontaneously cyclizes to form 1-pyrroline. This is the first step in one of two pathways for putrescine degradation, where putrescine is converted into 4-aminobutanoate (gamma-aminobutyrate or GABA) via 4-aminobutanal. Also functions as a cadaverine transaminase in a a L-lysine degradation pathway to succinate that proceeds via cadaverine, glutarate and L-2-hydroxyglutarate. This Salmonella paratyphi A (strain ATCC 9150 / SARB42) protein is Putrescine aminotransferase.